Consider the following 147-residue polypeptide: Large ribosomal subunit protein uL15 (147 aa).

Residues 1-46 are disordered; it reads MSIRLENLSYTPGARKEKHRKGRGHAAGKGKQAGRGQSGQKKRSTV. Positions 16–28 are enriched in basic residues; it reads KEKHRKGRGHAAG.

The protein belongs to the universal ribosomal protein uL15 family. As to quaternary structure, part of the 50S ribosomal subunit.

In terms of biological role, binds to the 23S rRNA. The chain is Large ribosomal subunit protein uL15 from Mesomycoplasma hyopneumoniae (strain 7448) (Mycoplasma hyopneumoniae).